A 402-amino-acid chain; its full sequence is Calcium-responsive transactivator (402 aa).

Residues 1–148 form an N-terminal auto-inhibitory domain; necessary for interaction with SMARCA4/BRG1 region; that stretch reads MSVAFASARP…TLPTTSMSLS (148 aa). The SH2-binding signature appears at 50–53; it reads YQQI. Disordered regions lie at residues 72–171 and 221–402; these read QSLL…VPMQ and AMMG…NYQQ. The segment covering 85–106 has biased composition (low complexity); sequence LGPGALSQSGSSQGLHPQGSLS. Polar residues-rich tracts occupy residues 128–149 and 161–171; these read NHVS…SLSG and SGPTSQSVPMQ. The interval 149 to 238 is methionine-rich intra-molecular domain; the sequence is GSGHGTGPGY…GGSMMGQRPM (90 aa). The segment covering 233 to 251 has biased composition (low complexity); the sequence is MGQRPMAPYRPSQQGSSQQ. The segment at 252–323 is MFD domain; it reads YLGQEEYYSE…SQYSQQQAGY (72 aa). The segment covering 261–277 has biased composition (polar residues); the sequence is EQYSHSQGSAEPMSQQY. Basic and acidic residues predominate over residues 296-305; the sequence is SYDRSFEDPT. The span at 311–375 shows a compositional bias: low complexity; the sequence is GGNSQYSQQQ…QGQGQQYGSY (65 aa). Residues 340–402 form a necessary for nuclear localization region; it reads NQQSYPGQQQ…EQGQYGNYQQ (63 aa). Positions 359–362 match the SH2-binding motif; that stretch reads SQYS. Positions 376–388 are enriched in polar residues; that stretch reads RTSQTGPSAQQQR. The short motif at 377–385 is the SH3-binding element; sequence TSQTGPSAQ. The segment covering 390–402 has biased composition (low complexity); that stretch reads YGYEQGQYGNYQQ. The interval 393-402 is necessary for interaction with CREBBP and for the recruitment of CREBBP to the nuclear bodies; the sequence is EQGQYGNYQQ. The SH2-binding signature appears at 397-400; the sequence is YGNY.

The protein belongs to the SS18 family. As to quaternary structure, homodimer. Dimerization may be necessary for its function in neuronal dendritic development. Interacts (via C-terminus) with CREBBP (via N-terminus), EP300 and SMARCA4/BRG1. Interacts with the nBAF complex. Association with CREBBP facilitates transcription while the association with SMARCA4/BRG1 suppresses CREST-mediated transcription in resting neurons.

Its subcellular location is the nucleus. The protein resides in the chromosome. The protein localises to the centromere. It is found in the kinetochore. In terms of biological role, transcriptional activator which is required for calcium-dependent dendritic growth and branching in cortical neurons. Recruits CREB-binding protein (CREBBP) to nuclear bodies. Component of the CREST-BRG1 complex, a multiprotein complex that regulates promoter activation by orchestrating a calcium-dependent release of a repressor complex and a recruitment of an activator complex. In resting neurons, transcription of the c-FOS promoter is inhibited by BRG1-dependent recruitment of a phospho-RB1-HDAC1 repressor complex. Upon calcium influx, RB1 is dephosphorylated by calcineurin, which leads to release of the repressor complex. At the same time, there is increased recruitment of CREBBP to the promoter by a CREST-dependent mechanism, which leads to transcriptional activation. The CREST-BRG1 complex also binds to the NR2B promoter, and activity-dependent induction of NR2B expression involves a release of HDAC1 and recruitment of CREBBP. This is Calcium-responsive transactivator (Ss18l1) from Mus musculus (Mouse).